Reading from the N-terminus, the 181-residue chain is NADH-quinone oxidoreductase subunit I (181 aa).

2 4Fe-4S ferredoxin-type domains span residues 44–74 and 90–119; these read LNRY…VEGA and RVYQ…MTND. Positions 54, 57, 60, 64, 99, 102, 105, and 109 each coordinate [4Fe-4S] cluster.

This sequence belongs to the complex I 23 kDa subunit family. In terms of assembly, NDH-1 is composed of 14 different subunits. Subunits NuoA, H, J, K, L, M, N constitute the membrane sector of the complex. Requires [4Fe-4S] cluster as cofactor.

Its subcellular location is the cell membrane. The catalysed reaction is a quinone + NADH + 5 H(+)(in) = a quinol + NAD(+) + 4 H(+)(out). In terms of biological role, NDH-1 shuttles electrons from NADH, via FMN and iron-sulfur (Fe-S) centers, to quinones in the respiratory chain. The immediate electron acceptor for the enzyme in this species is believed to be menaquinone. Couples the redox reaction to proton translocation (for every two electrons transferred, four hydrogen ions are translocated across the cytoplasmic membrane), and thus conserves the redox energy in a proton gradient. The sequence is that of NADH-quinone oxidoreductase subunit I from Mycobacterium marinum (strain ATCC BAA-535 / M).